We begin with the raw amino-acid sequence, 451 residues long: Ribosomal protein uS12 methylthiotransferase RimO (451 aa).

Residues 17-127 (PTIGFVSLGC…VLAQVHEHLP (111 aa)) enclose the MTTase N-terminal domain. Cysteine 26, cysteine 62, cysteine 91, cysteine 160, cysteine 164, and cysteine 167 together coordinate [4Fe-4S] cluster. The region spanning 146-383 (LTPRHYAYLK…MQLQQRISTE (238 aa)) is the Radical SAM core domain. Residues 386–451 (KQKVGQTLPV…DEYDLWGTRV (66 aa)) enclose the TRAM domain.

The protein belongs to the methylthiotransferase family. RimO subfamily. [4Fe-4S] cluster serves as cofactor.

The protein localises to the cytoplasm. The enzyme catalyses L-aspartate(89)-[ribosomal protein uS12]-hydrogen + (sulfur carrier)-SH + AH2 + 2 S-adenosyl-L-methionine = 3-methylsulfanyl-L-aspartate(89)-[ribosomal protein uS12]-hydrogen + (sulfur carrier)-H + 5'-deoxyadenosine + L-methionine + A + S-adenosyl-L-homocysteine + 2 H(+). Catalyzes the methylthiolation of an aspartic acid residue of ribosomal protein uS12. This chain is Ribosomal protein uS12 methylthiotransferase RimO, found in Cellvibrio japonicus (strain Ueda107) (Pseudomonas fluorescens subsp. cellulosa).